The sequence spans 210 residues: RNA chaperone ProQ (210 aa).

Positions 118-146 (KAAKPEKKRPARRVAAKGQHAKETTTNKA) are disordered. Residues 123–132 (EKKRPARRVA) are compositionally biased toward basic residues.

The protein belongs to the ProQ family.

Its subcellular location is the cytoplasm. In terms of biological role, RNA chaperone with significant RNA binding, RNA strand exchange and RNA duplexing activities. In Pasteurella multocida (strain Pm70), this protein is RNA chaperone ProQ.